The following is a 484-amino-acid chain: Glutamate--tRNA ligase (484 aa).

The 'HIGH' region signature appears at 11-21; sequence PSPTGYLHIGN. The 'KMSKS' region signature appears at 252–256; sequence KLSKR. K255 serves as a coordination point for ATP.

It belongs to the class-I aminoacyl-tRNA synthetase family. Glutamate--tRNA ligase type 1 subfamily. In terms of assembly, monomer.

It is found in the cytoplasm. It carries out the reaction tRNA(Glu) + L-glutamate + ATP = L-glutamyl-tRNA(Glu) + AMP + diphosphate. Its function is as follows. Catalyzes the attachment of glutamate to tRNA(Glu) in a two-step reaction: glutamate is first activated by ATP to form Glu-AMP and then transferred to the acceptor end of tRNA(Glu). This Staphylococcus saprophyticus subsp. saprophyticus (strain ATCC 15305 / DSM 20229 / NCIMB 8711 / NCTC 7292 / S-41) protein is Glutamate--tRNA ligase.